Here is a 544-residue protein sequence, read N- to C-terminus: CTP synthase (544 aa).

The amidoligase domain stretch occupies residues Met-1–Leu-265. Position 13 (Ser-13) interacts with CTP. Ser-13 provides a ligand contact to UTP. Ser-14–Leu-19 is a binding site for ATP. Tyr-54 provides a ligand contact to L-glutamine. Asp-71 is an ATP binding site. Positions 71 and 139 each coordinate Mg(2+). CTP contacts are provided by residues Asp-146–Glu-148, Lys-186–Gln-191, and Lys-222. UTP contacts are provided by residues Lys-186–Gln-191 and Lys-222. Val-240 contributes to the ATP binding site. The 253-residue stretch at Thr-291–Leu-543 folds into the Glutamine amidotransferase type-1 domain. An L-glutamine-binding site is contributed by Gly-353. The Nucleophile; for glutamine hydrolysis role is filled by Cys-380. Residues Phe-381–Gln-384, Glu-404, and Arg-472 contribute to the L-glutamine site. Catalysis depends on residues His-516 and Glu-518.

This sequence belongs to the CTP synthase family. In terms of assembly, homotetramer.

It carries out the reaction UTP + L-glutamine + ATP + H2O = CTP + L-glutamate + ADP + phosphate + 2 H(+). The enzyme catalyses L-glutamine + H2O = L-glutamate + NH4(+). It catalyses the reaction UTP + NH4(+) + ATP = CTP + ADP + phosphate + 2 H(+). It functions in the pathway pyrimidine metabolism; CTP biosynthesis via de novo pathway; CTP from UDP: step 2/2. With respect to regulation, allosterically activated by GTP, when glutamine is the substrate; GTP has no effect on the reaction when ammonia is the substrate. The allosteric effector GTP functions by stabilizing the protein conformation that binds the tetrahedral intermediate(s) formed during glutamine hydrolysis. Inhibited by the product CTP, via allosteric rather than competitive inhibition. Functionally, catalyzes the ATP-dependent amination of UTP to CTP with either L-glutamine or ammonia as the source of nitrogen. Regulates intracellular CTP levels through interactions with the four ribonucleotide triphosphates. The sequence is that of CTP synthase from Azospirillum brasilense.